We begin with the raw amino-acid sequence, 244 residues long: Glucosamine-6-phosphate deaminase (244 aa).

Aspartate 67 serves as the catalytic Proton acceptor; for enolization step. Asparagine 136 functions as the For ring-opening step in the catalytic mechanism. The active-site Proton acceptor; for ring-opening step is histidine 138. The active-site For ring-opening step is the glutamate 143.

Belongs to the glucosamine/galactosamine-6-phosphate isomerase family. NagB subfamily.

The enzyme catalyses alpha-D-glucosamine 6-phosphate + H2O = beta-D-fructose 6-phosphate + NH4(+). Its pathway is amino-sugar metabolism; N-acetylneuraminate degradation; D-fructose 6-phosphate from N-acetylneuraminate: step 5/5. Catalyzes the reversible isomerization-deamination of glucosamine 6-phosphate (GlcN6P) to form fructose 6-phosphate (Fru6P) and ammonium ion. This chain is Glucosamine-6-phosphate deaminase, found in Clostridium botulinum (strain 657 / Type Ba4).